A 214-amino-acid polypeptide reads, in one-letter code: GTP-binding protein ypt3 (214 aa).

17 to 24 (GDSGVGKS) is a GTP binding site. The short motif at 39-47 (SKSTIGVEF) is the Effector region element. Position 42 is a phosphothreonine (Thr-42). GTP contacts are provided by residues 65–69 (DTAGQ) and 123–126 (NKTD). Residues Cys-213 and Cys-214 are each lipidated (S-geranylgeranyl cysteine).

Belongs to the small GTPase superfamily. Rab family.

It is found in the cell membrane. The protein localises to the endosome membrane. Its subcellular location is the golgi apparatus membrane. It localises to the cytoplasm. The protein resides in the nucleus. Functionally, has a role in retrograde traffricking of proteins from the endosome to the Golgi. Involved in the secretory pathway where it has a role in acid phosphatase secretion. The polypeptide is GTP-binding protein ypt3 (ypt3) (Schizosaccharomyces pombe (strain 972 / ATCC 24843) (Fission yeast)).